Consider the following 263-residue polypeptide: TLC domain-containing protein 4 (263 aa).

4 consecutive transmembrane segments (helical) span residues 7-27 (LLISVTCISFFTFQLLFYFVS), 53-73 (VVSTCHSLVVGIFGLYIFLFD), 90-110 (VNIAIASGYLISDLSIIILYW), and 124-144 (ASLYAYYLVLKNGVLAYIGNF). The region spanning 44–246 (KKKIEWNSRV…ISKGCIKVIS (203 aa)) is the TLC domain. Lys-165 carries the N6-acetyllysine modification. The next 2 membrane-spanning stretches (helical) occupy residues 173–193 (IVINGILMTVVFFIVRIASML) and 211–231 (LGVLIQLSWVISCVVLDVMNV).

It belongs to the TLCD4 family.

The protein localises to the membrane. This is TLC domain-containing protein 4 from Homo sapiens (Human).